The chain runs to 430 residues: Pre-B-cell leukemia transcription factor 1 (430 aa).

Positions 1–40 (MDEQPRLMHSHAGVGMAGHPGLSQHLQDGAGGTEGEGGRK) are disordered. The PBC domain maps to 38–232 (GRKQDIGDIL…VMILRSRFLD (195 aa)). The PBC-A stretch occupies residues 45–124 (DILQQIMTIT…EGVAGPEKGG (80 aa)). Residues 127 to 232 (AAAAAAAAAS…VMILRSRFLD (106 aa)) are PBC-B. Residues 233–295 (ARRKRRNFNK…NKRIRYKKNI (63 aa)) constitute a DNA-binding region (homeobox; TALE-type). 2 disordered regions span residues 317–338 (SAHG…SSSF) and 395–430 (SPQG…DTSN). Over residues 323 to 338 (ANSPSTPNSAGSSSSF) the composition is skewed to low complexity. The segment covering 407 to 418 (DATTPSSVTSPT) has biased composition (polar residues).

The protein belongs to the TALE/PBX homeobox family. Forms a heterodimer with MEIS1 which binds DNA. The PBX1-MEIS1 heterodimer binds a cAMP-responsive sequence in CYP17. It also binds a consensus region in the SOX3 promoter. PBX1 forms heterotrimers with MEIS1 and a number of HOX proteins including HOXA9, HOXD4, HOXD9 and HOXD10. Forms heterodimers with HOXA1, HOXA5, HOXB7 and HOXB8 which bind the 5'-TGATTGAT-3' consensus sequence. Also forms heterodimers with HOXA5, HOXB7, HOXB8, HOXC8 and HOXD4 which bind the 5'-ATCAATCAA-3' consensus sequence. Interacts with PBXIP1. Interacts with TLX1. Interacts with FOXC1. Interacts with MN1. In terms of assembly, interacts with MEIS2 isoform 4, SP1, SP3 and KLF4. As to quaternary structure, part of a PDX1:PBX1b:MEIS2B complex; PBX1b recruits MEIS2B to the complex. Expressed in the kidney. Expressed in the endothelial cells of the glomeruli and interstitium (at protein level). Expressed in all tissues except in cells of the B and T lineage. Expressed strongly in kidney and brain.

The protein localises to the nucleus. Transcription factor which binds the DNA sequence 5'-TGATTGAT-3' as part of a heterodimer with HOX proteins such as HOXA1, HOXA5, HOXB7 and HOXB8. Binds to the DNA sequence 5'-TGATTGAC-3' in complex with a nuclear factor which is not a class I HOX protein. Has also been shown to bind the DNA sequence 5'-ATCAATCAA-3' cooperatively with HOXA5, HOXB7, HOXB8, HOXC8 and HOXD4. Acts as a transcriptional activator of PF4 in complex with MEIS1. Also activates transcription of SOX3 in complex with MEIS1 by binding to the 5'-TGATTGAC-3' consensus sequence. In natural killer cells, binds to the NFIL3 promoter and acts as a transcriptional activator of NFIL3, promoting natural killer cell development. Plays a role in the cAMP-dependent regulation of CYP17A1 gene expression via its cAMP-regulatory sequence (CRS1). Probably in complex with MEIS2, involved in transcriptional regulation by KLF4. Acts as a transcriptional activator of NKX2-5 and a transcriptional repressor of CDKN2B. Together with NKX2-5, required for spleen development through a mechanism that involves CDKN2B repression. Its function is as follows. As part of a PDX1:PBX1b:MEIS2B complex in pancreatic acinar cells, is involved in the transcriptional activation of the ELA1 enhancer; the complex binds to the enhancer B element and cooperates with the transcription factor 1 complex (PTF1) bound to the enhancer A element. The chain is Pre-B-cell leukemia transcription factor 1 (PBX1) from Homo sapiens (Human).